The following is a 302-amino-acid chain: Probable alpha-L-glutamate ligase (302 aa).

One can recognise an ATP-grasp domain in the interval 104–287 (LQLLSRKGVG…VAGLLIKFIE (184 aa)). ATP is bound by residues lysine 141, 178 to 179 (EY), aspartate 187, and 211 to 213 (RSN). Aspartate 248, glutamate 260, and asparagine 262 together coordinate Mg(2+). 3 residues coordinate Mn(2+): aspartate 248, glutamate 260, and asparagine 262.

Belongs to the RimK family. The cofactor is Mg(2+). Mn(2+) is required as a cofactor.

In Alcanivorax borkumensis (strain ATCC 700651 / DSM 11573 / NCIMB 13689 / SK2), this protein is Probable alpha-L-glutamate ligase.